The following is an 821-amino-acid chain: DNA ligase (821 aa).

Residues 33–37 (DVDYD), 82–83 (SL), and Glu113 each bind NAD(+). Lys115 (N6-AMP-lysine intermediate) is an active-site residue. NAD(+) is bound by residues Arg136, Glu173, Lys290, and Lys314. Zn(2+)-binding residues include Cys408, Cys411, Cys426, and Cys432. The BRCT domain occupies 741–821 (IVAGPLDGQT…RLLAYLAEHE (81 aa)).

The protein belongs to the NAD-dependent DNA ligase family. LigA subfamily. Mg(2+) is required as a cofactor. The cofactor is Mn(2+).

It catalyses the reaction NAD(+) + (deoxyribonucleotide)n-3'-hydroxyl + 5'-phospho-(deoxyribonucleotide)m = (deoxyribonucleotide)n+m + AMP + beta-nicotinamide D-nucleotide.. DNA ligase that catalyzes the formation of phosphodiester linkages between 5'-phosphoryl and 3'-hydroxyl groups in double-stranded DNA using NAD as a coenzyme and as the energy source for the reaction. It is essential for DNA replication and repair of damaged DNA. This Stenotrophomonas maltophilia (strain K279a) protein is DNA ligase.